A 737-amino-acid polypeptide reads, in one-letter code: Palmitoyltransferase AKR1 (737 aa).

The segment at 1–47 (MKQIDSEDSITVPNDTPEDNSASSMQPVMSNLSIEEHQSENEPIEQE) is disordered. The Cytoplasmic segment spans residues 1 to 304 (MKQIDSEDSI…VYFKKSLHTK (304 aa)). Positions 9-33 (SITVPNDTPEDNSASSMQPVMSNLS) are enriched in polar residues. 6 ANK repeats span residues 54 to 84 (PLLS…DLKH), 90 to 119 (ERVS…DVNF), 124 to 153 (LNAT…DPSV), 157 to 190 (QGFN…DIDC), 194 to 223 (NGRT…SVKA), and 227 to 256 (GGFT…DFFQ). Transmembrane regions (helical) follow at residues 305–325 (LVTF…FASI) and 326–346 (HPIF…YTLK). Over 347-364 (KYVIPAYAQRNTRQSFLK) the chain is Cytoplasmic. Residues 365 to 385 (TPFLAGVFSGSVFWASYTWLT) form a helical membrane-spanning segment. Residues 386–396 (RIMPLTLIEEP) lie on the Lumenal side of the membrane. The helical transmembrane segment at 397-417 (ITNLLFFAGVVLLASLFVKLV) threads the bilayer. Residues 418–493 (RSDPGLIPEE…YNDIGLRNHK (76 aa)) are Cytoplasmic-facing. The region spanning 450 to 500 (HFCISTWVRKPIRSKFSNFSRALVTRFDHFCPWIYNDIGLRNHKTFLFFIL) is the DHHC domain. Cys480 serves as the catalytic S-palmitoyl cysteine intermediate. A helical transmembrane segment spans residues 494–514 (TFLFFILCLETCIFVFLKLCM). At 515-547 (EYFDVLEDTFEDDYDLNCGIFGEDLCAGFFFDT) the chain is on the lumenal side. A helical membrane pass occupies residues 548 to 568 (FTFLVLAWTCFQGIWVGFLTF). Residues 569 to 737 (VQLFQTAKGV…ERHYLAEEIV (169 aa)) lie on the Cytoplasmic side of the membrane.

It belongs to the DHHC palmitoyltransferase family. AKR/ZDHHC17 subfamily.

The protein localises to the early endosome membrane. Its subcellular location is the golgi apparatus membrane. It carries out the reaction L-cysteinyl-[protein] + hexadecanoyl-CoA = S-hexadecanoyl-L-cysteinyl-[protein] + CoA. In terms of biological role, palmitoyltransferase specific for casein kinase 1. This is Palmitoyltransferase AKR1 (AKR1) from Lachancea kluyveri (strain ATCC 58438 / CBS 3082 / BCRC 21498 / NBRC 1685 / JCM 7257 / NCYC 543 / NRRL Y-12651) (Yeast).